A 122-amino-acid chain; its full sequence is Large ribosomal subunit protein eL8 (122 aa).

This sequence belongs to the eukaryotic ribosomal protein eL8 family. In terms of assembly, part of the 50S ribosomal subunit. Probably part of the RNase P complex.

The protein resides in the cytoplasm. Its function is as follows. Multifunctional RNA-binding protein that recognizes the K-turn motif in ribosomal RNA, the RNA component of RNase P, box H/ACA, box C/D and box C'/D' sRNAs. The polypeptide is Large ribosomal subunit protein eL8 (Methanothrix thermoacetophila (strain DSM 6194 / JCM 14653 / NBRC 101360 / PT) (Methanosaeta thermophila)).